The following is an 885-amino-acid chain: 3-hydroxy-3-methylglutaryl-coenzyme A reductase (885 aa).

The Cytoplasmic portion of the chain corresponds to 1 to 9; sequence MLSRLFRMH. Residues 10–39 traverse the membrane as a helical segment; that stretch reads GLFVASHPWEVIVGTVTLTICMMSMNMFTG. Residues 40–56 are Lumenal-facing; that stretch reads NDKICGWNYECPKFEED. Residues 57 to 78 form a helical membrane-spanning segment; it reads VLSSDIIILTITRCIAILYIYF. One can recognise an SSD domain in the interval 61–218; it reads DIIILTITRC…MTFFPACVSL (158 aa). An INSIG-binding motif motif is present at residues 75-78; the sequence is YIYF. Residues 79-89 are Cytoplasmic-facing; that stretch reads QFQNLRQLGSK. A Glycyl lysine isopeptide (Lys-Gly) (interchain with G-Cter in ubiquitin) cross-link involves residue Lys-89. The chain crosses the membrane as a helical span at residues 90–114; that stretch reads YILGIAGLFTIFSSFVFSTVVIHFL. Topologically, residues 115–123 are lumenal; the sequence is DKELTGLNE. Residues 124–149 form a helical membrane-spanning segment; the sequence is ALPFFLLLIDLSRASALAKFALSSNS. At 150–159 the chain is on the cytoplasmic side; the sequence is QDEVRENIAR. The chain crosses the membrane as a helical span at residues 160 to 187; that stretch reads GMAILGPTFTLDALVECLVIGVGTMSGV. Residues 188–191 lie on the Lumenal side of the membrane; it reads RQLE. The chain crosses the membrane as a helical span at residues 192-220; that stretch reads IMCCFGCMSVLATYFVFMTFFPACVSLVL. The Cytoplasmic segment spans residues 221–248; sequence ELSRESREGRPIWQLSHFARVLEGEENK. A Glycyl lysine isopeptide (Lys-Gly) (interchain with G-Cter in ubiquitin) cross-link involves residue Lys-248. Residues 249–275 traverse the membrane as a helical segment; sequence PNPVTQRVKIIMSLGLVLVHAHSRWIA. The Lumenal segment spans residues 276-314; it reads DPSPQNSTADNSKVSLGLDENVSKRIEPSVSLWQFYLSK. 2 N-linked (GlcNAc...) asparagine glycosylation sites follow: Asn-281 and Asn-296. Residues 315–339 form a helical membrane-spanning segment; the sequence is MISMDIEQVITLTLALLLAVKYIFF. Over 340–885 the chain is Cytoplasmic; the sequence is EQAETESTLS…LQGTCTKKAA (546 aa). Residues Glu-558, Lys-688, and Asp-764 each act as charge relay system in the active site. His-863 functions as the Proton donor in the catalytic mechanism. Ser-869 is modified (phosphoserine; by AMPK).

This sequence belongs to the HMG-CoA reductase family. In terms of assembly, homotetramer. Homodimer. Interacts (via its SSD) with INSIG1; the interaction, accelerated by sterols, leads to the recruitment of HMGCR to AMFR/gp78 for its ubiquitination by the sterol-mediated ERAD pathway. Interacts with UBIAD1. In terms of processing, undergoes sterol-mediated ubiquitination and ER-associated degradation (ERAD). Accumulation of sterols in the endoplasmic reticulum (ER) membrane, triggers binding of the reductase to the ER membrane protein INSIG1 or INSIG2. The INSIG1 binding leads to the recruitment of the ubiquitin ligase, AMFR/gp78, RNF139 or RNF145, initiating ubiquitination of the reductase. The ubiquitinated reductase is then extracted from the ER membrane and delivered to cytosolic 26S proteosomes by a mechanism probably mediated by the ATPase Valosin-containing protein VCP/p97. The INSIG2-binding leads to the recruitment of the ubiquitin ligase RNF139, initiating ubiquitination of the reductase. Lys-248 is the main site of ubiquitination. Ubiquitination is enhanced by the presence of a geranylgeranylated protein. N-glycosylated. Deglycosylated by NGLY1 on release from the endoplasmic reticulum (ER) in a sterol-mediated manner. Post-translationally, phosphorylated. Phosphorylation at Ser-869 reduces the catalytic activity. As to expression, high expression found in liver, heart, kidney, bladder and subcutaneous fat. Lower levels in lung, uterus and large intestine. Lowest levels in cerebrum, spleen, spinal cord, stomach, ovary, longissimus muscle, and small intestine.

It is found in the endoplasmic reticulum membrane. The protein resides in the peroxisome membrane. The catalysed reaction is (R)-mevalonate + 2 NADP(+) + CoA = (3S)-3-hydroxy-3-methylglutaryl-CoA + 2 NADPH + 2 H(+). It functions in the pathway metabolic intermediate biosynthesis; (R)-mevalonate biosynthesis; (R)-mevalonate from acetyl-CoA: step 3/3. Its activity is regulated as follows. Regulated by a negative feedback mechanism through sterols and non-sterol metabolites derived from mevalonate. Phosphorylation at Ser-869 down-regulates the catalytic activity. Its function is as follows. Catalyzes the conversion of (3S)-hydroxy-3-methylglutaryl-CoA (HMG-CoA) to mevalonic acid, the rate-limiting step in the synthesis of cholesterol and other isoprenoids, thus plays a critical role in cellular cholesterol homeostasis. The chain is 3-hydroxy-3-methylglutaryl-coenzyme A reductase (HMGCR) from Sus scrofa (Pig).